The chain runs to 488 residues: Glutamyl-tRNA(Gln) amidotransferase subunit A (488 aa).

Active-site charge relay system residues include Lys78 and Ser153. The active-site Acyl-ester intermediate is Ser177.

This sequence belongs to the amidase family. GatA subfamily. In terms of assembly, heterotrimer of A, B and C subunits.

The catalysed reaction is L-glutamyl-tRNA(Gln) + L-glutamine + ATP + H2O = L-glutaminyl-tRNA(Gln) + L-glutamate + ADP + phosphate + H(+). In terms of biological role, allows the formation of correctly charged Gln-tRNA(Gln) through the transamidation of misacylated Glu-tRNA(Gln) in organisms which lack glutaminyl-tRNA synthetase. The reaction takes place in the presence of glutamine and ATP through an activated gamma-phospho-Glu-tRNA(Gln). In Thermoanaerobacter pseudethanolicus (strain ATCC 33223 / 39E) (Clostridium thermohydrosulfuricum), this protein is Glutamyl-tRNA(Gln) amidotransferase subunit A.